Consider the following 669-residue polypeptide: Dymeclin (669 aa).

Residue glycine 2 is the site of N-myristoyl glycine attachment.

The protein belongs to the dymeclin family. In terms of processing, myristoylated in vitro; myristoylation is not essential for protein targeting to Golgi compartment.

The protein resides in the cytoplasm. It is found in the golgi apparatus. Its function is as follows. Necessary for correct organization of Golgi apparatus. This chain is Dymeclin (dym), found in Xenopus laevis (African clawed frog).